Consider the following 263-residue polypeptide: Ribosomal RNA small subunit methyltransferase J (263 aa).

S-adenosyl-L-methionine contacts are provided by residues 108–109 (RD), 124–125 (ER), and Asp178.

Belongs to the methyltransferase superfamily. RsmJ family.

The protein resides in the cytoplasm. The catalysed reaction is guanosine(1516) in 16S rRNA + S-adenosyl-L-methionine = N(2)-methylguanosine(1516) in 16S rRNA + S-adenosyl-L-homocysteine + H(+). Functionally, specifically methylates the guanosine in position 1516 of 16S rRNA. The sequence is that of Ribosomal RNA small subunit methyltransferase J from Idiomarina loihiensis (strain ATCC BAA-735 / DSM 15497 / L2-TR).